A 397-amino-acid polypeptide reads, in one-letter code: 2,3-bisphosphoglycerate-independent phosphoglycerate mutase (397 aa).

This sequence belongs to the BPG-independent phosphoglycerate mutase family. A-PGAM subfamily.

It carries out the reaction (2R)-2-phosphoglycerate = (2R)-3-phosphoglycerate. Its pathway is carbohydrate degradation; glycolysis; pyruvate from D-glyceraldehyde 3-phosphate: step 3/5. In terms of biological role, catalyzes the interconversion of 2-phosphoglycerate and 3-phosphoglycerate. The chain is 2,3-bisphosphoglycerate-independent phosphoglycerate mutase from Methanosarcina acetivorans (strain ATCC 35395 / DSM 2834 / JCM 12185 / C2A).